The chain runs to 1226 residues: Arf guanine nucleotide exchange factor SYT1 (1226 aa).

2 disordered regions span residues 17–39 and 113–158; these read HSND…DKLR and RNGQ…RNSK. The span at 131–142 shows a compositional bias: basic and acidic residues; it reads SIEKVPKPDGER. A Phosphothreonine modification is found at threonine 277. 3 disordered regions span residues 311-405, 954-1022, and 1178-1198; these read NSLM…TGMS, STGS…NEDY, and LEHG…DGID. Over residues 349 to 360 the composition is skewed to polar residues; sequence LSRSRSQSTSFV. A Phosphoserine modification is found at serine 369. The segment covering 386–405 has biased composition (polar residues); the sequence is GPTSVYNNKSNANSTITGMS. The region spanning 405 to 620 is the SEC7 domain; the sequence is SRRSSSIVNA…TYFYENVTAK (216 aa). Residues 844–1074 enclose the PH domain; that stretch reads ILQMGAIMNL…DSINLFSAYD (231 aa). Low complexity-rich tracts occupy residues 956–969 and 994–1017; these read GSHT…SSSA and SSVS…SSND.

Its subcellular location is the cytoplasm. Its activity is regulated as follows. Inhibited by brefeldin A. Guanine nucleotide exchange factor for Arf GTPases, stimulating the nucleotide exchange from the GDP-bound to the GTP-bound form. Catalyzes both the GDP release by and the GTP binding to ARF2. Has no exchange activity on Rab GTPases. Involved in vesicular transport. This is Arf guanine nucleotide exchange factor SYT1 (SYT1) from Saccharomyces cerevisiae (strain ATCC 204508 / S288c) (Baker's yeast).